The following is a 360-amino-acid chain: MQRDIMRYLNPSLRDIAAYSVEGGQQAAIKLNQNESPFDLPMWLKDAIVSEFVREPWNRYPDILPYRGTKAYADFLGVPAEGVMMGNGSNELLYTIFLACLGPGRKILVPDPSFSLYEKLALLLQASLVRVPLKASLDFDVDAIIQSAQEESVDFVVLSSPNNPTGKSITFDDIRRIASSCDALVLVDEAYIEFSRQDSALPLIEEFPNLVVLRTMSKALALAGMRIGFAIGRPELIAEIAKPKIPFASSRLAEITLMHVLENYAIVTDAVSYILNARDELYGELLSVQGVEPFMSDTNFLVIRVPDADAVFRKLIGRGILVRNVSGYHLMKNCLRFNIGLPDENSRLLDALLAINGGMA.

An N6-(pyridoxal phosphate)lysine modification is found at lysine 218.

It belongs to the class-II pyridoxal-phosphate-dependent aminotransferase family. Histidinol-phosphate aminotransferase subfamily. Homodimer. Pyridoxal 5'-phosphate serves as cofactor.

The catalysed reaction is L-histidinol phosphate + 2-oxoglutarate = 3-(imidazol-4-yl)-2-oxopropyl phosphate + L-glutamate. Its pathway is amino-acid biosynthesis; L-histidine biosynthesis; L-histidine from 5-phospho-alpha-D-ribose 1-diphosphate: step 7/9. The sequence is that of Histidinol-phosphate aminotransferase from Chlorobium phaeovibrioides (strain DSM 265 / 1930) (Prosthecochloris vibrioformis (strain DSM 265)).